A 278-amino-acid polypeptide reads, in one-letter code: HTH-type transcriptional activator RhaS (278 aa).

Positions 174 to 272 constitute an HTH araC/xylS-type domain; that stretch reads NQLLAWLEDH…DWSPRDIRQG (99 aa). DNA-binding regions (H-T-H motif) lie at residues 191–212 and 239–262; these read ESIADKFSLSLRTLHRQLKQQT and VTDIAYRCGFGDSNHFSTLFRREF.

Binds DNA as a dimer.

Its subcellular location is the cytoplasm. Activates expression of the rhaBAD and rhaT operons. This chain is HTH-type transcriptional activator RhaS, found in Citrobacter koseri (strain ATCC BAA-895 / CDC 4225-83 / SGSC4696).